Here is a 1375-residue protein sequence, read N- to C-terminus: DNA-directed RNA polymerase subunit beta (1375 aa).

The protein belongs to the RNA polymerase beta chain family. The RNAP catalytic core consists of 2 alpha, 1 beta, 1 beta' and 1 omega subunit. When a sigma factor is associated with the core the holoenzyme is formed, which can initiate transcription.

The enzyme catalyses RNA(n) + a ribonucleoside 5'-triphosphate = RNA(n+1) + diphosphate. Its function is as follows. DNA-dependent RNA polymerase catalyzes the transcription of DNA into RNA using the four ribonucleoside triphosphates as substrates. The sequence is that of DNA-directed RNA polymerase subunit beta from Coxiella burnetii (strain CbuG_Q212) (Coxiella burnetii (strain Q212)).